The primary structure comprises 156 residues: Small ribosomal subunit protein uS7c (156 aa).

This sequence belongs to the universal ribosomal protein uS7 family. As to quaternary structure, part of the 30S ribosomal subunit.

Its subcellular location is the plastid. The protein localises to the chloroplast. Functionally, one of the primary rRNA binding proteins, it binds directly to 16S rRNA where it nucleates assembly of the head domain of the 30S subunit. The chain is Small ribosomal subunit protein uS7c (rps7) from Euglena gracilis.